The sequence spans 222 residues: Thiol:disulfide interchange protein DsbL (222 aa).

Positions 1–27 (MSAKWINSIFKSVVLTAALALPFTASA) are cleaved as a signal peptide. Positions 28–221 (FTEGTDYMVL…MAQLVRELAT (194 aa)) constitute a Thioredoxin domain. A disulfide bond links cysteine 56 and cysteine 59.

It belongs to the thioredoxin family. DsbL subfamily. As to quaternary structure, interacts with DsbI.

The protein resides in the periplasm. In terms of biological role, involved in disulfide-bond formation. Acts by transferring its disulfide bond to other proteins. Part of a redox system composed of DsbI and DsbL that mediates formation of an essential disulfide bond in AssT. This chain is Thiol:disulfide interchange protein DsbL, found in Lelliottia amnigena (Enterobacter amnigenus).